The chain runs to 166 residues: Bacterial non-heme ferritin (166 aa).

The region spanning 2-145 (LSKELLAALN…THIDYLTRIG (144 aa)) is the Ferritin-like diiron domain. E17, E50, H53, E94, and Q127 together coordinate Fe cation.

The protein belongs to the ferritin family. Prokaryotic subfamily.

The protein localises to the cytoplasm. The catalysed reaction is 4 Fe(2+) + O2 + 6 H2O = 4 iron(III) oxide-hydroxide + 12 H(+). Iron-storage protein. The protein is Bacterial non-heme ferritin (ftnA) of Staphylococcus epidermidis (strain ATCC 12228 / FDA PCI 1200).